The sequence spans 438 residues: 3-phosphoshikimate 1-carboxyvinyltransferase (438 aa).

Positions 28, 29, and 33 each coordinate 3-phosphoshikimate. Phosphoenolpyruvate is bound at residue lysine 28. 2 residues coordinate phosphoenolpyruvate: glycine 97 and arginine 125. Positions 168, 169, 170, 316, and 343 each coordinate 3-phosphoshikimate. Position 170 (glutamine 170) interacts with phosphoenolpyruvate. Glutamate 316 serves as the catalytic Proton acceptor. Phosphoenolpyruvate-binding residues include arginine 347, arginine 388, and lysine 413.

This sequence belongs to the EPSP synthase family. Monomer.

Its subcellular location is the cytoplasm. It carries out the reaction 3-phosphoshikimate + phosphoenolpyruvate = 5-O-(1-carboxyvinyl)-3-phosphoshikimate + phosphate. It functions in the pathway metabolic intermediate biosynthesis; chorismate biosynthesis; chorismate from D-erythrose 4-phosphate and phosphoenolpyruvate: step 6/7. In terms of biological role, catalyzes the transfer of the enolpyruvyl moiety of phosphoenolpyruvate (PEP) to the 5-hydroxyl of shikimate-3-phosphate (S3P) to produce enolpyruvyl shikimate-3-phosphate and inorganic phosphate. This is 3-phosphoshikimate 1-carboxyvinyltransferase from Rhodococcus jostii (strain RHA1).